The chain runs to 194 residues: Endoribonuclease ToxN (194 aa).

Residues 114–182 are a coiled coil; the sequence is MLKQYLFLKE…DQAKERDKAR (69 aa). Over residues 171-182 the composition is skewed to basic and acidic residues; that stretch reads ERDQAKERDKAR. The disordered stretch occupies residues 171-194; it reads ERDQAKERDKARRIAYMRQMGRER.

It belongs to the ToxN/AbiQ toxin family. As to quaternary structure, one ToxN monomer binds to a 34-nt-long single repeat of the ToxI RNA; this complex forms a triangular heterohexameric complex with ToxN connected by the ToxI RNA to another toxin molecule. The ToxI repeats are cleavage products of their precursor. The ToxI repeat forms a pseudoknot which occludes the toxin active site.

Functionally, toxic component of a type III toxin-antitoxin (TA) system. An endoribonuclease which cleaves between the first and second A of AAAAA sequences; it tolerates other nucleotides in positions +2 and +4 of the consensus. Digests cognate antitoxin RNA ToxI as shown by the 2'-3'-cyclic phosphate at the 3' end of the 34-nt repeats and probably other RNAs. Inhibits growth when expressed in E.coli without causing cell lysis; this bacteriostatic effect is neutralized by cognate RNA antitoxin ToxI, which has 2.9 nearly identical 34 nucleotide-long repeats. Non-cognate antitoxin RNA from P.atrosepticum does not inhibit this toxin. The toxin-antitoxin pair function in plasmid maintenance (a plasmid addiction system), but unlike its P.atrosepticum homolog it is not seen to confer resistance to bacteriophages. This Bacillus thuringiensis subsp. kurstaki protein is Endoribonuclease ToxN.